Consider the following 21-residue polypeptide: Peptide PGLa-R2 (21 aa).

Leu21 is subject to Leucine amide.

As to expression, expressed by the skin glands.

It localises to the secreted. In terms of biological role, antimicrobial peptide. This is Peptide PGLa-R2 from Xenopus ruwenzoriensis (Uganda clawed frog).